Consider the following 125-residue polypeptide: MEKKKLPFGLKNKEKLTAYNDEKIHELHRQLKAKIEAKKAKEKQDSKTKDTDKKVDQTPKVKVPFTKKFSNLWFGIDKEVNKIVWVTSKKLITIFLLIVLVSAIMIGIYFGINHLFIALGVFKGK.

The disordered stretch occupies residues 36 to 57; sequence EAKKAKEKQDSKTKDTDKKVDQ. The helical transmembrane segment at 92 to 112 threads the bilayer; it reads ITIFLLIVLVSAIMIGIYFGI.

The protein resides in the membrane. This is an uncharacterized protein from Mycoplasma pneumoniae (strain ATCC 29342 / M129 / Subtype 1) (Mycoplasmoides pneumoniae).